The primary structure comprises 265 residues: Silencing boundary-establishment protein FUB1-like protein (265 aa).

Positions 194-265 (HPENRSRNEQ…MPPGSSDMFM (72 aa)) are disordered.

This sequence belongs to the proteasome inhibitor PI31 family. Interacts with the 20S proteasome.

Its subcellular location is the cytoplasm. The protein resides in the nucleus. Its function is as follows. May play a role in the establishment of transcriptional silencing boundaries, preventing the propagation of heterochromatic silencing. The protein is Silencing boundary-establishment protein FUB1-like protein of Schizosaccharomyces pombe (strain 972 / ATCC 24843) (Fission yeast).